The following is a 51-amino-acid chain: UPF0391 membrane protein PsycPRwf_2202 (51 aa).

The next 2 helical transmembrane spans lie at Ile6 to Leu26 and Ser27 to Ile47.

Belongs to the UPF0391 family.

Its subcellular location is the cell membrane. The polypeptide is UPF0391 membrane protein PsycPRwf_2202 (Psychrobacter sp. (strain PRwf-1)).